We begin with the raw amino-acid sequence, 121 residues long: Insertion element IS406 uncharacterized 13.3 kDa protein (121 aa).

In Burkholderia multivorans (strain ATCC 17616 / 249), this protein is Insertion element IS406 uncharacterized 13.3 kDa protein.